The primary structure comprises 553 residues: Solute carrier family 22 member 2 (553 aa).

The Cytoplasmic segment spans residues 1–21; it reads MPTVDDILEHIGEFHLFQKQT. A helical transmembrane segment spans residues 22–42; sequence FFLLALLSGAFTPIYVGIVFL. Residues 43-150 lie on the Extracellular side of the membrane; that stretch reads GFTPNHHCRS…LVCAHSWMLD (108 aa). An N-linked (GlcNAc...) asparagine glycan is attached at N71. Residues 151–171 traverse the membrane as a helical segment; sequence LFQSLVNVGFFIGAVGIGYLA. Residues 172 to 177 are Cytoplasmic-facing; that stretch reads DRFGRK. The chain crosses the membrane as a helical span at residues 178–198; the sequence is FCLLVTILINAISGVLMAISP. Residues 199–210 are Extracellular-facing; it reads NYAWMLVFRFLQ. The helical transmembrane segment at 211-231 threads the bilayer; that stretch reads GLVSKAGWLIGYILITEFVGL. Topologically, residues 232–238 are cytoplasmic; that stretch reads GYRRTVG. The helical transmembrane segment at 239-259 threads the bilayer; that stretch reads ICYQIAFTVGLLILAGVAYAL. Over 260–263 the chain is Extracellular; that stretch reads PNWR. Residues 264 to 284 traverse the membrane as a helical segment; sequence WLQFAVTLPNFCFLLYFWCIP. The Proline-rich sequence motif lies at 284–288; that stretch reads PESPR. At 285–348 the chain is on the cytoplasmic side; sequence ESPRWLISQN…VRTPQIRKHT (64 aa). Residues 349 to 369 traverse the membrane as a helical segment; the sequence is LILMYNWFTSSVLYQGLIMHM. The Extracellular portion of the chain corresponds to 370–375; sequence GLAGDN. Residues 376-396 form a helical membrane-spanning segment; sequence IYLDFFYSALVEFPAAFIIIL. Over 397-404 the chain is Cytoplasmic; that stretch reads TIDRIGRR. The helical transmembrane segment at 405–425 threads the bilayer; sequence YPWAVSNMVAGAACLASVFIP. Residues 426-432 lie on the Extracellular side of the membrane; the sequence is DDLQWLK. The helical transmembrane segment at 433–453 threads the bilayer; sequence ITVACLGRMGITIAYEMVCLV. The Cytoplasmic portion of the chain corresponds to 454-464; sequence NAELYPTYIRN. The chain crosses the membrane as a helical span at residues 465–485; sequence LAVLVCSSMCDIGGIVTPFLV. Residues 486–494 are Extracellular-facing; sequence YRLTDIWLE. A helical membrane pass occupies residues 495–515; it reads FPLVVFAVVGLVAGGLVLLLP. The Cytoplasmic segment spans residues 516–553; the sequence is ETKGKALPETIEDAEKMQRPRKKKEKRIYLQVKKAELS.

Belongs to the major facilitator (TC 2.A.1) superfamily. Organic cation transporter (TC 2.A.1.19) family. In terms of processing, tyrosine phosphorylated by tyrosine-protein kinase YES1. As to expression, expressed in kidney and ureter. To a lower extent, also expressed in brain and embryo.

The protein localises to the basolateral cell membrane. The protein resides in the basal cell membrane. It is found in the apical cell membrane. The catalysed reaction is (R)-noradrenaline(out) = (R)-noradrenaline(in). It catalyses the reaction (R)-adrenaline(out) = (R)-adrenaline(in). The enzyme catalyses serotonin(out) = serotonin(in). It carries out the reaction dopamine(out) = dopamine(in). The catalysed reaction is histamine(out) = histamine(in). It catalyses the reaction thiamine(in) = thiamine(out). The enzyme catalyses creatinine(in) = creatinine(out). It carries out the reaction 1-methylnicotinamide(out) = 1-methylnicotinamide(in). The catalysed reaction is guanidine(out) = guanidine(in). It catalyses the reaction choline(out) = choline(in). The enzyme catalyses agmatine(out) = agmatine(in). It carries out the reaction putrescine(out) = putrescine(in). The catalysed reaction is spermidine(in) = spermidine(out). It catalyses the reaction tyramine(in) = tyramine(out). The enzyme catalyses L-histidyl-L-proline diketopiperazine(in) = L-histidyl-L-proline diketopiperazine(out). It carries out the reaction (R)-salsolinol(in) = (R)-salsolinol(out). The catalysed reaction is N-methyl-(R)-salsolinol(in) = N-methyl-(R)-salsolinol(out). It catalyses the reaction acetylcholine(in) = acetylcholine(out). The enzyme catalyses prostaglandin F2alpha(out) = prostaglandin F2alpha(in). It carries out the reaction prostaglandin E2(out) = prostaglandin E2(in). With respect to regulation, tyrosine phosphorylation of the transporter leads to activation of the transport activity. TEA uptake is activated by tyrosine phosphorylation. Inhibited by cGMP, most likely through a cGMP-binding protein that interacts with OCT2. Electrogenic voltage-dependent transporter that mediates the transport of a variety of organic cations such as endogenous bioactive amines, cationic drugs and xenobiotics. Functions as a Na(+)-independent, bidirectional uniporter. Cation cellular uptake or release is driven by the electrochemical potential, i.e. membrane potential and concentration gradient. However, may also engage electroneutral cation exchange when saturating concentrations of cation substrates are reached. Predominantly expressed at the basolateral membrane of hepatocytes and proximal tubules and involved in the uptake and disposition of cationic compounds by hepatic and renal clearance from the blood flow. Implicated in monoamine neurotransmitters uptake such as histamine, dopamine, adrenaline/epinephrine, noradrenaline/norepinephrine, serotonin and tyramine, thereby supporting a physiological role in the central nervous system by regulating interstitial concentrations of neurotransmitters. Also capable of transporting dopaminergic neuromodulators cyclo(his-pro), salsolinol and N-methyl-salsolinol, thereby involved in the maintenance of dopaminergic cell integrity in the central nervous system. Mediates the bidirectional transport of acetylcholine (ACh) at the apical membrane of ciliated cell in airway epithelium, thereby playing a role in luminal release of ACh from bronchial epithelium. Also transports guanidine and endogenous monoamines such as vitamin B1/thiamine, creatinine and N-1-methylnicotinamide (NMN). Mediates the uptake and efflux of quaternary ammonium compound choline. Mediates the bidirectional transport of polyamine agmatine and the uptake of polyamines putrescine and spermidine. Able to transport non-amine endogenous compounds such as prostaglandin E2 (PGE2) and prostaglandin F2-alpha (PGF2-alpha). Also involved in the uptake of xenobiotic 4-(4-(dimethylamino)styryl)-N-methylpyridinium (ASP). May contribute to regulate the transport of organic compounds in testis across the blood-testis-barrier. The polypeptide is Solute carrier family 22 member 2 (Mus musculus (Mouse)).